A 183-amino-acid polypeptide reads, in one-letter code: 2-C-methyl-D-erythritol 2,4-cyclodiphosphate synthase (183 aa).

The a divalent metal cation site is built by D10 and H12. 4-CDP-2-C-methyl-D-erythritol 2-phosphate is bound by residues D10–H12 and H38–S39. A divalent metal cation is bound at residue H46. 4-CDP-2-C-methyl-D-erythritol 2-phosphate is bound by residues D60 to G62 and F65 to D69.

This sequence belongs to the IspF family. As to quaternary structure, homotrimer. A divalent metal cation is required as a cofactor.

The enzyme catalyses 4-CDP-2-C-methyl-D-erythritol 2-phosphate = 2-C-methyl-D-erythritol 2,4-cyclic diphosphate + CMP. Its pathway is isoprenoid biosynthesis; isopentenyl diphosphate biosynthesis via DXP pathway; isopentenyl diphosphate from 1-deoxy-D-xylulose 5-phosphate: step 4/6. Functionally, involved in the biosynthesis of isopentenyl diphosphate (IPP) and dimethylallyl diphosphate (DMAPP), two major building blocks of isoprenoid compounds. Catalyzes the conversion of 4-diphosphocytidyl-2-C-methyl-D-erythritol 2-phosphate (CDP-ME2P) to 2-C-methyl-D-erythritol 2,4-cyclodiphosphate (ME-CPP) with a corresponding release of cytidine 5-monophosphate (CMP). This chain is 2-C-methyl-D-erythritol 2,4-cyclodiphosphate synthase, found in Verminephrobacter eiseniae (strain EF01-2).